Here is a 126-residue protein sequence, read N- to C-terminus: Ribosome-binding factor A (126 aa).

Belongs to the RbfA family. Monomer. Binds 30S ribosomal subunits, but not 50S ribosomal subunits or 70S ribosomes.

The protein resides in the cytoplasm. One of several proteins that assist in the late maturation steps of the functional core of the 30S ribosomal subunit. Associates with free 30S ribosomal subunits (but not with 30S subunits that are part of 70S ribosomes or polysomes). Required for efficient processing of 16S rRNA. May interact with the 5'-terminal helix region of 16S rRNA. The protein is Ribosome-binding factor A of Haemophilus ducreyi (strain 35000HP / ATCC 700724).